The following is an 832-amino-acid chain: Golgin subfamily A member 6-like protein 24 (832 aa).

Disordered stretches follow at residues 1–107, 303–333, 351–431, 508–652, and 664–832; these read MWPQ…QEAL, QEQE…MRRQ, MHEQ…EMWR, QEEM…EQEE, and QEEM…MQEH. Residues 13–27 show a composition bias toward basic residues; it reads LPTHPHLPTHPHLPT. A compositionally biased stretch (basic and acidic residues) spans 37-58; the sequence is MSKETRQSKLAEAKEQLTDHHP. Composition is skewed to polar residues over residues 59 to 69 and 77 to 89; these read QTNPSVGTAAS and NNGT…TSGG. The span at 92–107 shows a compositional bias: basic and acidic residues; the sequence is SPEDEQKASHQHQEAL. Positions 163-828 form a coiled coil; the sequence is LEQALSAVAT…EVRLRQQEEK (666 aa). Basic and acidic residues-rich tracts occupy residues 664–684 and 692–832; these read QEEM…KMWE and QEEK…MQEH.

This sequence belongs to the GOLGA6 family.

The polypeptide is Golgin subfamily A member 6-like protein 24 (Homo sapiens (Human)).